A 420-amino-acid chain; its full sequence is Mitochondrial chaperone BCS1 (420 aa).

The Mitochondrial intermembrane segment spans residues 1 to 15 (MTLSDFIGALKDNPY). A helical membrane pass occupies residues 16–32 (FGAGFGLVGVGTALAVA). The Mitochondrial matrix portion of the chain corresponds to 33–420 (RKGAQVGMIF…AIKNIAEIKD (388 aa)). An ATP-binding site is contributed by 230–237 (GPPGCGKS).

This sequence belongs to the AAA ATPase family. BCS1 subfamily.

Its subcellular location is the mitochondrion inner membrane. It carries out the reaction ATP + H2O = ADP + phosphate + H(+). Chaperone necessary for the incorporation of Rieske iron-sulfur protein uqcrfs1 into the mitochondrial respiratory chain complex III. The protein is Mitochondrial chaperone BCS1 (bcs1l) of Danio rerio (Zebrafish).